The primary structure comprises 257 residues: DNA repair protein RecO (257 aa).

This sequence belongs to the RecO family.

Its function is as follows. Involved in DNA repair and RecF pathway recombination. This Streptococcus sanguinis (strain SK36) protein is DNA repair protein RecO.